The primary structure comprises 216 residues: Probable GTP-binding protein EngB (216 aa).

Positions D43–T216 constitute an EngB-type G domain. GTP-binding positions include G51–S58, G78–E82, D96–G99, T163–D166, and T197–S199. S58 and T80 together coordinate Mg(2+).

This sequence belongs to the TRAFAC class TrmE-Era-EngA-EngB-Septin-like GTPase superfamily. EngB GTPase family. The cofactor is Mg(2+).

Functionally, necessary for normal cell division and for the maintenance of normal septation. The polypeptide is Probable GTP-binding protein EngB (Roseobacter denitrificans (strain ATCC 33942 / OCh 114) (Erythrobacter sp. (strain OCh 114))).